The following is a 232-amino-acid chain: UPF0502 protein mma_2112 (232 aa).

This sequence belongs to the UPF0502 family.

The protein is UPF0502 protein mma_2112 of Janthinobacterium sp. (strain Marseille) (Minibacterium massiliensis).